The chain runs to 320 residues: Bifunctional phosphoglucose/phosphomannose isomerase (320 aa).

Residues 20–153 form the SIS domain; sequence IAKDLTPYKG…NLLGVDKDEL (134 aa). D-fructose 6-phosphate is bound by residues Gly37, Ser38, Ser80, Ser82, Thr85, and Arg132. Glu204 functions as the Proton acceptor in the catalytic mechanism. D-fructose 6-phosphate is bound by residues His220 and Lys313. His220 serves as the catalytic Proton donor. The active-site Proton acceptor is the Lys313.

This sequence belongs to the PGI/PMI family. As to quaternary structure, homodimer.

The enzyme catalyses alpha-D-glucose 6-phosphate = beta-D-fructose 6-phosphate. It catalyses the reaction D-mannose 6-phosphate = D-fructose 6-phosphate. In terms of biological role, dual specificity isomerase that catalyzes the isomerization of both glucose-6-phosphate and mannose-6-phosphate to fructose-6-phosphate. This Aquifex aeolicus (strain VF5) protein is Bifunctional phosphoglucose/phosphomannose isomerase.